The primary structure comprises 251 residues: Cytochrome c oxidase subunit 2 (251 aa).

The first 15 residues, 1 to 15, serve as a signal peptide directing secretion; sequence MLTFLSNLNNMIIMN. Residues 16–42 are Mitochondrial intermembrane-facing; sequence DVPTPYGVYFQDSATPNQEGILELHDN. A helical membrane pass occupies residues 43–64; it reads IMFYLLVILGLVSWLLFTITRT. Topologically, residues 65-82 are mitochondrial matrix; the sequence is YSKNPIAYKYIKHGQTIE. The helical transmembrane segment at 83 to 107 threads the bilayer; it reads IIWTIFPAVVLLIIAFPSFILLYLC. Over 108–251 the chain is Mitochondrial intermembrane; it reads DEVISPAMTI…PSFLEWLNEQ (144 aa). Residues His186, Cys221, Glu223, Cys225, His229, and Met232 each contribute to the Cu cation site. Position 223 (Glu223) interacts with Mg(2+).

This sequence belongs to the cytochrome c oxidase subunit 2 family. Component of the cytochrome c oxidase (complex IV, CIV), a multisubunit enzyme composed of a catalytic core of 3 subunits and several supernumerary subunits. The complex exists as a monomer or a dimer and forms supercomplexes (SCs) in the inner mitochondrial membrane with ubiquinol-cytochrome c oxidoreductase (cytochrome b-c1 complex, complex III, CIII). Cu cation serves as cofactor. Post-translationally, the signal sequence of COX2 is processed by IMP1.

It is found in the mitochondrion inner membrane. It catalyses the reaction 4 Fe(II)-[cytochrome c] + O2 + 8 H(+)(in) = 4 Fe(III)-[cytochrome c] + 2 H2O + 4 H(+)(out). In terms of biological role, component of the cytochrome c oxidase, the last enzyme in the mitochondrial electron transport chain which drives oxidative phosphorylation. The respiratory chain contains 3 multisubunit complexes succinate dehydrogenase (complex II, CII), ubiquinol-cytochrome c oxidoreductase (cytochrome b-c1 complex, complex III, CIII) and cytochrome c oxidase (complex IV, CIV), that cooperate to transfer electrons derived from NADH and succinate to molecular oxygen, creating an electrochemical gradient over the inner membrane that drives transmembrane transport and the ATP synthase. Cytochrome c oxidase is the component of the respiratory chain that catalyzes the reduction of oxygen to water. Electrons originating from reduced cytochrome c in the intermembrane space (IMS) are transferred via the dinuclear copper A center (CU(A)) of subunit 2 and heme A of subunit 1 to the active site in subunit 1, a binuclear center (BNC) formed by heme A3 and copper B (CU(B)). The BNC reduces molecular oxygen to 2 water molecules using 4 electrons from cytochrome c in the IMS and 4 protons from the mitochondrial matrix. This Lachancea kluyveri (strain ATCC 58438 / CBS 3082 / BCRC 21498 / NBRC 1685 / JCM 7257 / NCYC 543 / NRRL Y-12651) (Yeast) protein is Cytochrome c oxidase subunit 2 (COX2).